Reading from the N-terminus, the 371-residue chain is T-cell acute lymphocytic leukemia protein 1 (371 aa).

A disordered region spans residues Met-1–Gly-71. Residues Gly-34–Asp-57 are compositionally biased toward basic and acidic residues. The region spanning Val-204–Leu-256 is the bHLH domain. The segment at Gln-263–Arg-371 is disordered. Positions His-293 to Ile-305 are enriched in basic and acidic residues. A compositionally biased stretch (acidic residues) spans Gly-321–Asp-335.

Expressed in the main hemopoietic organs in adults, namely the kidney and the spleen. Also expressed in the liver, brain, gill and gonads.

The protein localises to the nucleus. Functionally, transcription factor that plays a pivotal role in hemopoietic and endothelial development. The polypeptide is T-cell acute lymphocytic leukemia protein 1 (Takifugu rubripes (Japanese pufferfish)).